A 778-amino-acid polypeptide reads, in one-letter code: DNA repair protein crb2 (778 aa).

The interval 35–56 is disordered; that stretch reads KVNASINPSPPRSNDNSNKEFS. Phosphothreonine; by ATM is present on threonine 73. Serine 80 bears the Phosphoserine; by ATM mark. The segment at 141–245 is interaction with rad4; that stretch reads VSNSSQILSP…PPAFLPETSE (105 aa). A Phosphothreonine modification is found at threonine 187. At threonine 215 the chain carries Phosphothreonine; by cdc2. Threonine 235 carries the post-translational modification Phosphothreonine. Residues 358-493 form a tudor-like region; the sequence is SRRSFKNRVL…RRFQGRDLSF (136 aa). The tract at residues 370 to 404 is interaction with dimethylated histone H4; the sequence is FKGYPSFYYPATLVAPVHSAVTSSIMYKVQFDDAT. The region spanning 535–653 is the BRCT domain; the sequence is SNQLIFDDCV…RVVDFSPYLL (119 aa).

Homodimer. Dimerization is mediated via the BRCT domain. Interacts (via BRCT domain) with rad3. Interacts with rad4 (via BRCT1,2 domains); a single rad4 molecule interacts simultaneously with both Thr-187 phosphorylation sites in a crb2 dimer. Interacts (via Tudor domain) with histone H4K20me2. Interacts (via BRCT dmain) with histone H2AS128ph (gamma-H2A). Interacts with chk1. Interacts with sad1. In terms of processing, phosphorylation of Thr-73 and Ser-80 by rad3/ATM promotes interaction with chk1. Phosphorylation at Thr-187 is dependent on phosphorylation at Thr-215 and Thr-235. Phosphorylation at Thr-215 and Thr-235 may prime the non-canonical Thr-187 site for cdc2/CDK phosphorylation.

The protein localises to the nucleus. Its function is as follows. Essential for cell cycle arrest at the G1 and G2 stages following DNA damage by X-, and UV-irradiation, or inactivation of DNA ligase. Plays a role in the response to DNA damage. Interaction with rad4 via its phosphorylation sites in the N-terminus couples the DNA checkpoint apparatus to chromatin via interaction of its C-terminal BRCT domains with epigenetic modifications on histones H4 and H2A, respectively, in the G1/S phase of the cell cycle, and facilitates recruitment of the checkpoint kinase chk1. The chain is DNA repair protein crb2 from Schizosaccharomyces pombe (strain 972 / ATCC 24843) (Fission yeast).